The primary structure comprises 775 residues: MASLIYRQLLTNSYSVDLHDEIEQIGSEKTQNVTVNPGPFAQTRYAPVNWGHGEINDSTTVELILDGPYQPTTFTPPTDYWILINSNTNGVVYESTNNSDFWTAVVAVEPHVNPVDRQYLIFGENKQFNVSNDSDKWKFLEMFRSSSQNEFYNRRTLTSDTRLVGILKYGGRVWTFHGETPRATTDSSNTANLNNISITIHSEFYIIPRSQESKCNEYINNGLPPIQNTRNVVPLSLSSRSIQYKRAQVNEDITISKTSLWKEMQYNGDIIIRFKFGNSIIKPGGLGYKWSEISFKAANYQYNYLRDGEQVTAHTTCSVNGINNFSYNGGYLPTDFSVLRYEVIKENSYVYVDYWDDSKAFRNMVYVRSLAANLNSVKCTGGSYDFSIPVGAWPVMNGGAVSLHFAGVTLSTQFTDFVSLNSLRFRFSLTVDEPSFSILRTRTVNLYGLPAANPNNGNEYYEISGRFSLISLVPTNDDYQTPIMNSVTVRQDLERQLTDLREEFNSLSQEIAMSQLIDLALLPLDMFSMFSGIKSTIHLTKSMATSVMKKFRKSKLATSVSEMTNSLSDAASSASRSVSVRSNISAISNWTNVSDDVSNVTDSVNDVSTQTSTISKKLRLKEMITQTEGMSFDDISAAVLKTKIDKSTQIRKNTLPDIVEEASEKFIPKRSYRILKDDEVMEINTEGKFFAYKIDTLNEVPFDVNKFTELVTNTPVISAIIDFKTLKNLNDNYGITRTEAFNLIKSNPNVLRNFINQNHPIIRNRIEQLILQCRL.

Residues 65–223 are spike head; it reads LDGPYQPTTF…KCNEYINNGL (159 aa). The interval 247 to 478 is spike body and stalk (antigen domain); that stretch reads AQVNEDITIS…LISLVPTNDD (232 aa). A DGE motif; interaction with ITGA2/ITGB1 heterodimer motif is present at residues 307–309; sequence DGE. A disulfide bridge connects residues Cys-317 and Cys-379. Residues 388-408 are hydrophobic; possible role in virus entry into host cell; it reads IPVGAWPVMNGGAVSLHFAGV. Residues 447–449 carry the YGL motif; interaction with ITGA4 motif; sequence YGL. A coiled-coil region spans residues 483–510; it reads IMNSVTVRQDLERQLTDLREEFNSLSQE. The spike foot stretch occupies residues 509–775; it reads QEIAMSQLID…IEQLILQCRL (267 aa). Positions 643–645 match the KID motif; interaction with HSPA8 motif; the sequence is KID.

This sequence belongs to the rotavirus VP4 family. Homotrimer. VP4 adopts a dimeric appearance above the capsid surface, while forming a trimeric base anchored inside the capsid layer. Only hints of the third molecule are observed above the capsid surface. It probably performs a series of molecular rearrangements during viral entry. Prior to trypsin cleavage, it is flexible. The priming trypsin cleavage triggers its rearrangement into rigid spikes with approximate two-fold symmetry of their protruding parts. After an unknown second triggering event, cleaved VP4 may undergo another rearrangement, in which two VP5* subunits fold back on themselves and join a third subunit to form a tightly associated trimer, shaped like a folded umbrella. Interacts with VP6. Interacts with VP7. As to quaternary structure, homotrimer. The trimer is coiled-coil stabilized by its C-terminus, however, its N-terminus, known as antigen domain or 'body', seems to be flexible allowing it to self-associate either as a dimer or a trimer. Post-translationally, proteolytic cleavage by trypsin results in activation of VP4 functions and greatly increases infectivity. The penetration into the host cell is dependent on trypsin treatment of VP4. It produces two peptides, VP5* and VP8* that remain associated with the virion. Cleavage of VP4 by trypsin probably occurs in vivo in the lumen of the intestine prior to infection of enterocytes. Trypsin seems to be incorporated into the three-layered viral particles but remains inactive as long as the viral outer capsid is intact and would only be activated upon the solubilization of the latter.

It localises to the virion. The protein localises to the host rough endoplasmic reticulum. It is found in the host cell membrane. The protein resides in the host cytoplasm. Its subcellular location is the host cytoskeleton. It localises to the host endoplasmic reticulum-Golgi intermediate compartment. In terms of biological role, spike-forming protein that mediates virion attachment to the host epithelial cell receptors and plays a major role in cell penetration, determination of host range restriction and virulence. Rotavirus attachment and entry into the host cell probably involves multiple sequential contacts between the outer capsid proteins VP4 and VP7, and the cell receptors. It is subsequently lost, together with VP7, following virus entry into the host cell. Following entry into the host cell, low intracellular or intravesicular Ca(2+) concentration probably causes the calcium-stabilized VP7 trimers to dissociate from the virion. This step is probably necessary for the membrane-disrupting entry step and the release of VP4, which is locked onto the virion by VP7. During the virus exit from the host cell, VP4 seems to be required to target the newly formed virions to the host cell lipid rafts. Forms the spike 'foot' and 'body' and acts as a membrane permeabilization protein that mediates release of viral particles from endosomal compartments into the cytoplasm. During entry, the part of VP5* that protrudes from the virus folds back on itself and reorganizes from a local dimer to a trimer. This reorganization may be linked to membrane penetration by exposing VP5* hydrophobic region. In integrin-dependent strains, VP5* targets the integrin heterodimer ITGA2/ITGB1 for cell attachment. Functionally, forms the head of the spikes and mediates the recognition of specific host cell surface glycans. It is the viral hemagglutinin and an important target of neutralizing antibodies. In sialic acid-dependent strains, VP8* binds to host cell sialic acid, most probably a ganglioside, providing the initial contact. In some other strains, VP8* mediates the attachment to histo-blood group antigens (HBGAs) for viral entry. The protein is Outer capsid protein VP4 of Homo sapiens (Human).